We begin with the raw amino-acid sequence, 236 residues long: MSYNLTDPYEIARYIKEAKKSTPIKAYIEGDLSNCDFTNIEKFNSGDLYILFGESEEILVIIEKNKDKIKNCRIEQDRRKSAIPLLDMLKINARIEPGATIRDKVIIGENAVIMMGAVVNIGAEIGEGTMVDMNAVVGARGKLGKNVHLGAGAVVAGVLEPPSSDPCTIEDNVLIGANAVILEGVKIGKGSVVAAGSIVTTDVPENVVVAGAPAKIIKEVDVKTKDKTKLLDDLRK.

It belongs to the transferase hexapeptide repeat family. DapH subfamily.

The catalysed reaction is (S)-2,3,4,5-tetrahydrodipicolinate + acetyl-CoA + H2O = L-2-acetamido-6-oxoheptanedioate + CoA. Its pathway is amino-acid biosynthesis; L-lysine biosynthesis via DAP pathway; LL-2,6-diaminopimelate from (S)-tetrahydrodipicolinate (acetylase route): step 1/3. In terms of biological role, catalyzes the transfer of an acetyl group from acetyl-CoA to tetrahydrodipicolinate. The protein is 2,3,4,5-tetrahydropyridine-2,6-dicarboxylate N-acetyltransferase of Clostridium botulinum (strain ATCC 19397 / Type A).